The chain runs to 245 residues: 23S rRNA (guanosine-2'-O-)-methyltransferase RlmB (245 aa).

Residues glycine 197, isoleucine 217, and leucine 226 each contribute to the S-adenosyl-L-methionine site.

The protein belongs to the class IV-like SAM-binding methyltransferase superfamily. RNA methyltransferase TrmH family. RlmB subfamily.

It localises to the cytoplasm. The enzyme catalyses guanosine(2251) in 23S rRNA + S-adenosyl-L-methionine = 2'-O-methylguanosine(2251) in 23S rRNA + S-adenosyl-L-homocysteine + H(+). Functionally, specifically methylates the ribose of guanosine 2251 in 23S rRNA. The chain is 23S rRNA (guanosine-2'-O-)-methyltransferase RlmB from Pasteurella multocida (strain Pm70).